The following is a 642-amino-acid chain: Threonine--tRNA ligase (642 aa).

The TGS domain occupies 1–61 (MPVIRFCDGS…TEDSSISFIS (61 aa)). Positions 243–534 (DHRKIGKLLN…LIEEFSGKLP (292 aa)) are catalytic. 3 residues coordinate Zn(2+): Cys334, His385, and His511.

Belongs to the class-II aminoacyl-tRNA synthetase family. Homodimer. Zn(2+) is required as a cofactor.

It is found in the cytoplasm. The catalysed reaction is tRNA(Thr) + L-threonine + ATP = L-threonyl-tRNA(Thr) + AMP + diphosphate + H(+). Its function is as follows. Catalyzes the attachment of threonine to tRNA(Thr) in a two-step reaction: L-threonine is first activated by ATP to form Thr-AMP and then transferred to the acceptor end of tRNA(Thr). Also edits incorrectly charged L-seryl-tRNA(Thr). This Buchnera aphidicola subsp. Schizaphis graminum (strain Sg) protein is Threonine--tRNA ligase.